Reading from the N-terminus, the 433-residue chain is 26S proteasome regulatory subunit 7 (433 aa).

Positions 1 to 22 (MPDYLGADQRKTKEDEKDDKPI) are disordered. Positions 8–22 (DQRKTKEDEKDDKPI) are enriched in basic and acidic residues. The residue at position 116 (lysine 116) is an N6-acetyllysine. 216 to 223 (GPPGTGKT) provides a ligand contact to ATP. Lysine 422 is modified (N6-acetyllysine).

Belongs to the AAA ATPase family. As to quaternary structure, component of the 19S proteasome regulatory particle complex. The 26S proteasome consists of a 20S core particle (CP) and two 19S regulatory subunits (RP). The regulatory particle is made of a lid composed of 9 subunits, a base containing 6 ATPases including PSMC2 and few additional components. Interacts with NDC80/HEC; this interaction is detected only during M phase. Interacts and SQSTM1. Interacts with PAAF1. Directly interacts with TRIM5. Monoubiquitinated by RNF181. Post-translationally, phosphorylated. Dephosphorylated by UBLCP1 which impairs PSMC2 ATPase activity and disrupts 26S proteasome assembly.

The protein resides in the cytoplasm. Its subcellular location is the nucleus. Component of the 26S proteasome, a multiprotein complex involved in the ATP-dependent degradation of ubiquitinated proteins. This complex plays a key role in the maintenance of protein homeostasis by removing misfolded or damaged proteins, which could impair cellular functions, and by removing proteins whose functions are no longer required. Therefore, the proteasome participates in numerous cellular processes, including cell cycle progression, apoptosis, or DNA damage repair. PSMC2 belongs to the heterohexameric ring of AAA (ATPases associated with diverse cellular activities) proteins that unfolds ubiquitinated target proteins that are concurrently translocated into a proteolytic chamber and degraded into peptides. The polypeptide is 26S proteasome regulatory subunit 7 (PSMC2) (Bos taurus (Bovine)).